A 104-amino-acid chain; its full sequence is Large ribosomal subunit protein uL24 (104 aa).

This sequence belongs to the universal ribosomal protein uL24 family. Part of the 50S ribosomal subunit.

Its function is as follows. One of two assembly initiator proteins, it binds directly to the 5'-end of the 23S rRNA, where it nucleates assembly of the 50S subunit. One of the proteins that surrounds the polypeptide exit tunnel on the outside of the subunit. The polypeptide is Large ribosomal subunit protein uL24 (Shigella dysenteriae serotype 1 (strain Sd197)).